A 368-amino-acid chain; its full sequence is Peptidoglycan-recognition protein LA (368 aa).

The Cytoplasmic segment spans residues 1 to 127 (MFEENNSPTT…KSPSRRVTRN (127 aa)). Disordered regions lie at residues 21 to 46 (QRASPAQRLHNLTSAGSSTSSSGLPL) and 101 to 122 (INSNNANGNGNANRSRDKSPSR). Composition is skewed to low complexity over residues 33–43 (TSAGSSTSSSG) and 102–113 (NSNNANGNGNAN). A helical transmembrane segment spans residues 128–148 (TILLITLILLVLATGLIVLYV). Residues 149 to 368 (ELNRPKPELP…MKTESWDAKQ (220 aa)) lie on the Extracellular side of the membrane. C221 and C227 are oxidised to a cystine. Residues 233–320 (TIQDSAIAEK…DVDYKLVAQN (88 aa)) form the N-acetylmuramoyl-L-alanine amidase domain. N-linked (GlcNAc...) asparagine glycans are attached at residues N273 and N320.

This sequence belongs to the N-acetylmuramoyl-L-alanine amidase 2 family. In terms of tissue distribution, expressed in uninduced hemocytes and mbn-2 cells.

It is found in the cell membrane. In terms of biological role, peptidoglycan-recognition protein probably involved in innate immunity by binding to peptidoglycans (PGN) of bacteria and activating the immune response. The protein is Peptidoglycan-recognition protein LA (PGRP-LA) of Drosophila melanogaster (Fruit fly).